Here is a 133-residue protein sequence, read N- to C-terminus: Small ribosomal subunit protein uS11 (133 aa).

Residues M1 to G23 are disordered. Basic residues predominate over residues G7–K17.

This sequence belongs to the universal ribosomal protein uS11 family. As to quaternary structure, part of the 30S ribosomal subunit. Interacts with proteins S7 and S18. Binds to IF-3.

Its function is as follows. Located on the platform of the 30S subunit, it bridges several disparate RNA helices of the 16S rRNA. Forms part of the Shine-Dalgarno cleft in the 70S ribosome. The polypeptide is Small ribosomal subunit protein uS11 (Pseudarthrobacter chlorophenolicus (strain ATCC 700700 / DSM 12829 / CIP 107037 / JCM 12360 / KCTC 9906 / NCIMB 13794 / A6) (Arthrobacter chlorophenolicus)).